The following is a 431-amino-acid chain: Adenylosuccinate synthetase (431 aa).

GTP is bound by residues Gly21–Lys27 and Gly49–Thr51. The Proton acceptor role is filled by Asp22. 2 residues coordinate Mg(2+): Asp22 and Gly49. IMP is bound by residues Asp22–Lys25, Asn47–His50, Thr138, Arg152, Asn230, Thr245, and Arg309. His50 serves as the catalytic Proton donor. Ala305–Arg311 is a substrate binding site. GTP is bound by residues Arg311, Lys337 to Asp339, and Gly419 to Gly421.

This sequence belongs to the adenylosuccinate synthetase family. Homodimer. It depends on Mg(2+) as a cofactor.

It is found in the cytoplasm. It carries out the reaction IMP + L-aspartate + GTP = N(6)-(1,2-dicarboxyethyl)-AMP + GDP + phosphate + 2 H(+). The protein operates within purine metabolism; AMP biosynthesis via de novo pathway; AMP from IMP: step 1/2. In terms of biological role, plays an important role in the de novo pathway and in the salvage pathway of purine nucleotide biosynthesis. Catalyzes the first committed step in the biosynthesis of AMP from IMP. This is Adenylosuccinate synthetase from Paramecium tetraurelia.